The following is a 341-amino-acid chain: Glyceraldehyde-3-phosphate dehydrogenase 1 (341 aa).

NAD(+)-binding positions include 13-14 (RI), Asp-35, and Lys-85. D-glyceraldehyde 3-phosphate-binding positions include 157–159 (SCT), Thr-188, 217–218 (TG), and Arg-240. The Nucleophile role is filled by Cys-158. Residue Asn-322 participates in NAD(+) binding.

Belongs to the glyceraldehyde-3-phosphate dehydrogenase family. As to quaternary structure, homotetramer.

It is found in the cytoplasm. It carries out the reaction D-glyceraldehyde 3-phosphate + phosphate + NAD(+) = (2R)-3-phospho-glyceroyl phosphate + NADH + H(+). The protein operates within carbohydrate degradation; glycolysis; pyruvate from D-glyceraldehyde 3-phosphate: step 1/5. The sequence is that of Glyceraldehyde-3-phosphate dehydrogenase 1 (gpd-1) from Caenorhabditis elegans.